Reading from the N-terminus, the 505-residue chain is Lysine--tRNA ligase (505 aa).

Glu415 and Glu422 together coordinate Mg(2+).

It belongs to the class-II aminoacyl-tRNA synthetase family. Homodimer. Mg(2+) serves as cofactor.

The protein localises to the cytoplasm. It catalyses the reaction tRNA(Lys) + L-lysine + ATP = L-lysyl-tRNA(Lys) + AMP + diphosphate. The chain is Lysine--tRNA ligase from Xanthomonas axonopodis pv. citri (strain 306).